A 311-amino-acid polypeptide reads, in one-letter code: Glycine--tRNA ligase alpha subunit (311 aa).

The protein belongs to the class-II aminoacyl-tRNA synthetase family. Tetramer of two alpha and two beta subunits.

The protein resides in the cytoplasm. The enzyme catalyses tRNA(Gly) + glycine + ATP = glycyl-tRNA(Gly) + AMP + diphosphate. This chain is Glycine--tRNA ligase alpha subunit, found in Rhizobium meliloti (strain 1021) (Ensifer meliloti).